The sequence spans 1183 residues: MNYNPLHLLPLPPTALDPKPIPTSLTLDPFSDVLWVGASSGIVSALCSPLTLARNVHFPAHGCKIGGGGFSAQGVSAVREVRVTDRDVWTLTEGGIGGRKRGGAPKWIVSDVTRSLRTMSPNPTNSHELITGGSGSLLLANTARGEVVRSIENSSPVVKLAPLHRTVLAAGLSGQVTVLDPRTGFKAAQNISPVQAHTGGLSGADVQGNIVATWGWTHMQGHPLPDPLIRLYDVRALRPLPPISFSSGPAFVLLHPSSSSHIVVSSQQGMLQTIDMSLGPSATVFQQLDVSSYITSMALSSRGDYLAFGDGDGQLHVWTTNETGENAAVDENGSIVLPPFNGYDGVKPEWPDQVDPLPTIAWEESTPLNLVGMPYYNEALLSQFPSECYATSTSPLFNPPATIPQPVLSSMKMVDFVGYAPNPKELRGKRYVLRAVPGAEGRARGKGRRDSGPRFRSEKDKKGTYKDKEEIEEELNDGEVPKYYRKVEIKYSKFGIEDFDFEFYNRTNYSGLETDILNSYTNSLLQALHYTLPLRAIATAHICVDCKKEHCLLCEAGFLFRMLEDAKGRNCQASNFSRAFSATSQAYALGLMDENTNSKSTAPYGSLIQNFNRWLLSTFSTESIVDGETFHLRPFPQKTSGLDGLSMNDGPSAIDQVLGVKIKTTNTCRHCGFVSSRDSTLHVVDLVYPKKMNPRLSFSDILRSSLIRDSTTKAICSSCKAFAPLDSRRSLSPSSGHPLPPVLSVNAMVTNSDVYGFWKDKKDVKEKDGVRRFLPKRVTIREVGKLENGQEEGVKYSIRSMVVQIQESPDAVAHLVSFVKMPSKDGSSAWIMFNDFLVRPVSEDEVLSFPDQWKVPAVIILERENAEELLNLEVLPKELDREILFKDVSIAWNRKQDMIKHKILQREEMPKRGTLVAIDAEFVALQQEEMEFRSDGTKNILRPSHMSLARVSVLRGEGEMEGKPFIDDYIHTSEAVVDYLTEFSGIKAGDLDPNNSPHTLVPLKVAYKKLRLLVDLGCIFVGHGLSKDFRTINIFVPPEQVMDTVLIYTLPGSQRKLSLRFLAWYLLHQDIQTNSHDSIEDAHFALLLCKLWMDYASESEEAFEIVMEDIFAEGKKLAFKPPSSAGNMMAEQQLSPVSFPPLSNGDQTVARAVVKSRMATPPPPTKLGLPQWASQNSPSPLRR.

WD repeat units follow at residues 150 to 189 and 289 to 328; these read SIEN…KAAQ and DVSS…ENAA. The interval 331–478 is linker; it reads ENGSIVLPPF…EEIEEELNDG (148 aa). Residues 439-470 form a disordered region; the sequence is AEGRARGKGRRDSGPRFRSEKDKKGTYKDKEE. Basic and acidic residues predominate over residues 448-469; it reads RRDSGPRFRSEKDKKGTYKDKE. A USP domain is found at 479–864; it reads EVPKYYRKVE…VPAVIILERE (386 aa). The Exonuclease domain occupies 916–1085; it reads VAIDAEFVAL…HDSIEDAHFA (170 aa). A divalent metal cation is bound by residues D919, E921, D1028, and D1081. The tract at residues 1155 to 1183 is disordered; it reads KSRMATPPPPTKLGLPQWASQNSPSPLRR. The span at 1172 to 1183 shows a compositional bias: polar residues; it reads WASQNSPSPLRR.

Belongs to the peptidase C19 family. PAN2 subfamily. Forms a heterotrimer with an asymmetric homodimer of the regulatory subunit PAN3 to form the poly(A)-nuclease (PAN) deadenylation complex. It depends on a divalent metal cation as a cofactor.

The protein resides in the cytoplasm. It carries out the reaction Exonucleolytic cleavage of poly(A) to 5'-AMP.. With respect to regulation, positively regulated by the regulatory subunit PAN3. In terms of biological role, catalytic subunit of the poly(A)-nuclease (PAN) deadenylation complex, one of two cytoplasmic mRNA deadenylases involved in mRNA turnover. PAN specifically shortens poly(A) tails of RNA and the activity is stimulated by poly(A)-binding protein PAB1. PAN deadenylation is followed by rapid degradation of the shortened mRNA tails by the CCR4-NOT complex. Deadenylated mRNAs are then degraded by two alternative mechanisms, namely exosome-mediated 3'-5' exonucleolytic degradation, or deadenylation-dependent mRNA decaping and subsequent 5'-3' exonucleolytic degradation by XRN1. May also be involved in post-transcriptional maturation of mRNA poly(A) tails. In Cryptococcus neoformans var. neoformans serotype D (strain B-3501A) (Filobasidiella neoformans), this protein is PAN2-PAN3 deadenylation complex catalytic subunit PAN2.